We begin with the raw amino-acid sequence, 401 residues long: uncharacterized protein (401 aa).

[4Fe-4S] cluster is bound by residues cysteine 7, cysteine 13, cysteine 16, and cysteine 94. Residues glutamine 230, tyrosine 259, glutamate 280, and aspartate 328 each contribute to the S-adenosyl-L-methionine site. Cysteine 355 acts as the Nucleophile in catalysis.

This sequence belongs to the class I-like SAM-binding methyltransferase superfamily. RNA M5U methyltransferase family.

This is an uncharacterized protein from Chlamydia caviae (strain ATCC VR-813 / DSM 19441 / 03DC25 / GPIC) (Chlamydophila caviae).